Consider the following 281-residue polypeptide: NADPH-dependent 7-cyano-7-deazaguanine reductase (281 aa).

Substrate is bound at residue 88–90 (IES). 90-91 (SK) contributes to the NADPH binding site. Cys189 serves as the catalytic Thioimide intermediate. The active-site Proton donor is Asp196. 228 to 229 (HE) is a substrate binding site. 257 to 258 (RG) contacts NADPH.

Belongs to the GTP cyclohydrolase I family. QueF type 2 subfamily. Homodimer.

The protein resides in the cytoplasm. It catalyses the reaction 7-aminomethyl-7-carbaguanine + 2 NADP(+) = 7-cyano-7-deazaguanine + 2 NADPH + 3 H(+). It functions in the pathway tRNA modification; tRNA-queuosine biosynthesis. Catalyzes the NADPH-dependent reduction of 7-cyano-7-deazaguanine (preQ0) to 7-aminomethyl-7-deazaguanine (preQ1). The sequence is that of NADPH-dependent 7-cyano-7-deazaguanine reductase from Sodalis glossinidius (strain morsitans).